Consider the following 562-residue polypeptide: Tetratricopeptide repeat protein 34 (562 aa).

The segment at 1 to 30 (MLHKKPQRANENGISQRKKPSDQDNSSVKE) is disordered. Over residues 19–30 (KPSDQDNSSVKE) the composition is skewed to basic and acidic residues. TPR repeat units lie at residues 51–84 (DVSRILCTDALYQLDRIEEAHKMLSLALSNSSQR), 175–208 (KDSLLARARCYGQLGQKKTAIFDFNAILKDEPYN), 210–242 (EALSGKGFMHLTLNQQKEAVHDICLAIKADASY), 304–337 (AHFHILYTDILIAKEKYDEAFNYLRKSFNGNAID), 388–421 (FQAAGQEGNSLIQENQHEKALDYYSLAVISSNNN), 423–455 (KYLRQRAMCLTHLRDYSSAIKDIDKAILRHSSH), 461–494 (AEDYCSKGHILLLSCDEDAATTQYMKAISMEHAS), and 509–542 (AGIFSQVANRYFEQRLFEESWKMSECGLLIDENN).

The chain is Tetratricopeptide repeat protein 34 (ttc34) from Xenopus laevis (African clawed frog).